Here is a 173-residue protein sequence, read N- to C-terminus: Calcium-binding protein 5 (173 aa).

4 EF-hand domains span residues 28–63 (DEIE…MGYM), 82–99 (GRVD…KLLA), 105–140 (IGVQ…LLGE), and 142–173 (LTPR…MMSR). Ca(2+) is bound by residues D41, D43, D45, and D52. 10 residues coordinate Ca(2+): D118, N120, D122, E124, E129, D155, N157, D159, T161, and E166.

In terms of assembly, interacts with CACNA1C (via C-terminal CDB motif) in a calcium-dependent manner. Interacts with STXBP1. Interacts with MYO6. Retina.

It localises to the cytoplasm. Its function is as follows. Inhibits calcium-dependent inactivation of L-type calcium channel and shifts voltage dependence of activation to more depolarized membrane potentials. Involved in the transmission of light signals. May positively regulate neurotransmitter vesicle endocytosis and exocytosis in a salt-dependent manner. May play a role in the extension and network organization of neurites. The polypeptide is Calcium-binding protein 5 (CABP5) (Homo sapiens (Human)).